Reading from the N-terminus, the 20-residue chain is GMP synthase [glutamine-hydrolyzing] (20 aa).

The GMPS ATP-PPase domain maps to 1–20 (ALGDQLLSVFVDHTLVDEVA).

In terms of assembly, homodimer.

It carries out the reaction XMP + L-glutamine + ATP + H2O = GMP + L-glutamate + AMP + diphosphate + 2 H(+). It participates in purine metabolism; GMP biosynthesis; GMP from XMP (L-Gln route): step 1/1. In terms of biological role, catalyzes the synthesis of GMP from XMP. The chain is GMP synthase [glutamine-hydrolyzing] (guaA) from Fructilactobacillus sanfranciscensis (Lactobacillus sanfranciscensis).